Here is a 146-residue protein sequence, read N- to C-terminus: Large ribosomal subunit protein bL9 (146 aa).

Belongs to the bacterial ribosomal protein bL9 family. In terms of assembly, part of the 50S ribosomal subunit. Contacts protein L31.

Its function is as follows. Binds to the 23S rRNA and protein L31. This is Large ribosomal subunit protein bL9 (rplI) from Deinococcus radiodurans (strain ATCC 13939 / DSM 20539 / JCM 16871 / CCUG 27074 / LMG 4051 / NBRC 15346 / NCIMB 9279 / VKM B-1422 / R1).